The sequence spans 590 residues: Synaptotagmin-3 (590 aa).

Topologically, residues 1–54 are vesicular; it reads MSGDYEDDLCRRALILVSDLCARVRDADTNDRCQEFNDRIRGYPRGPDADISVS. The cysteine motif stretch occupies residues 10–34; the sequence is CRRALILVSDLCARVRDADTNDRCQ. The helical transmembrane segment at 55–75 threads the bilayer; it reads LLSVIVTFCGIVLLGVSLFVS. Residues 76 to 590 lie on the Cytoplasmic side of the membrane; sequence WKLCWVPWRD…KGLSEKENSE (515 aa). 3 disordered regions span residues 143-220, 234-260, and 273-295; these read AELL…VTSL, TQQT…LPGG, and ELYQ…GEAG. Residues 185–203 show a composition bias toward low complexity; the sequence is SPELPSEGGAGSGLLLLPP. Polar residues predominate over residues 234–243; it reads TQQTLTSQPD. Gly residues predominate over residues 278–295; it reads TGPGGRRSGGGPGSGEAG. Arginine 284 carries the post-translational modification Omega-N-methylarginine. C2 domains lie at 299-420 and 431-565; these read PCGR…PLWR and DLGE…EHWH. Aspartate 330, aspartate 336, aspartate 388, phenylalanine 389, aspartate 390, serine 393, aspartate 396, aspartate 462, aspartate 468, aspartate 522, and aspartate 524 together coordinate Ca(2+).

The protein belongs to the synaptotagmin family. In terms of assembly, homodimer; disulfide-linked via the cysteine motif. Can also form heterodimers with SYT6, SYT9 and SYT10. Ca(2+) is required as a cofactor. Expressed in melanocytes.

It localises to the cell membrane. The protein resides in the cytoplasmic vesicle. It is found in the secretory vesicle membrane. Functionally, ca(2+) sensor involved in Ca(2+)-dependent exocytosis of secretory vesicles through Ca(2+) and phospholipid binding to the C2 domain. Ca(2+) induces binding of the C2-domains to phospholipid membranes and to assembled SNARE-complexes; both actions contribute to triggering exocytosis. Plays a role in dendrite formation by melanocytes. The polypeptide is Synaptotagmin-3 (SYT3) (Homo sapiens (Human)).